The sequence spans 149 residues: Calmodulin (149 aa).

The residue at position 2 (A2) is an N-acetylalanine. EF-hand domains are found at residues 8 to 43 (EQIA…LGQN), 44 to 79 (PTEA…KMKD), 81 to 116 (DSEE…LGEK), and 117 to 149 (LTDE…MMAK). Ca(2+) contacts are provided by D21, D23, D25, C27, E32, D57, D59, N61, T63, E68, D94, D96, N98, and E105. Position 116 is an N6,N6,N6-trimethyllysine (K116). Ca(2+) contacts are provided by D130, D132, D134, Q136, and E141.

The protein belongs to the calmodulin family.

Its function is as follows. Calmodulin mediates the control of a large number of enzymes, ion channels and other proteins by Ca(2+). Among the enzymes to be stimulated by the calmodulin-Ca(2+) complex are a number of protein kinases and phosphatases. The chain is Calmodulin (CALM1) from Zea mays (Maize).